The sequence spans 432 residues: Glutamyl-tRNA reductase (432 aa).

Residues 55 to 58 (TCNR), Ser-114, 119 to 121 (ETQ), and Gln-125 each bind substrate. The Nucleophile role is filled by Cys-56. 194-199 (GAGEMI) lines the NADP(+) pocket.

Belongs to the glutamyl-tRNA reductase family. Homodimer.

It carries out the reaction (S)-4-amino-5-oxopentanoate + tRNA(Glu) + NADP(+) = L-glutamyl-tRNA(Glu) + NADPH + H(+). It participates in porphyrin-containing compound metabolism; protoporphyrin-IX biosynthesis; 5-aminolevulinate from L-glutamyl-tRNA(Glu): step 1/2. Catalyzes the NADPH-dependent reduction of glutamyl-tRNA(Glu) to glutamate 1-semialdehyde (GSA). The polypeptide is Glutamyl-tRNA reductase (Burkholderia lata (strain ATCC 17760 / DSM 23089 / LMG 22485 / NCIMB 9086 / R18194 / 383)).